Here is a 510-residue protein sequence, read N- to C-terminus: Probable cytosol aminopeptidase (510 aa).

Residues Lys282 and Asp287 each coordinate Mn(2+). Lys294 is a catalytic residue. 3 residues coordinate Mn(2+): Asp305, Asp364, and Glu366. Arg368 is a catalytic residue.

This sequence belongs to the peptidase M17 family. It depends on Mn(2+) as a cofactor.

The protein localises to the cytoplasm. It carries out the reaction Release of an N-terminal amino acid, Xaa-|-Yaa-, in which Xaa is preferably Leu, but may be other amino acids including Pro although not Arg or Lys, and Yaa may be Pro. Amino acid amides and methyl esters are also readily hydrolyzed, but rates on arylamides are exceedingly low.. It catalyses the reaction Release of an N-terminal amino acid, preferentially leucine, but not glutamic or aspartic acids.. Functionally, presumably involved in the processing and regular turnover of intracellular proteins. Catalyzes the removal of unsubstituted N-terminal amino acids from various peptides. This Cupriavidus pinatubonensis (strain JMP 134 / LMG 1197) (Cupriavidus necator (strain JMP 134)) protein is Probable cytosol aminopeptidase.